Here is a 390-residue protein sequence, read N- to C-terminus: uncharacterized protein (390 aa).

11 consecutive transmembrane segments (helical) span residues 10-30, 43-63, 81-101, 134-154, 162-182, 213-233, 246-266, 272-292, 298-318, 341-361, and 363-383; these read LSFC…LPIL, FLIG…QIPF, FMFF…GLII, AIGV…PIIV, IFWI…FFVP, FYLG…MIPN, WKVY…FIFY, ILEN…IIFL, LLFL…LEVF, TSQF…YSFL, and FSQI…FSFF.

Belongs to the major facilitator superfamily.

The protein localises to the cell membrane. This is an uncharacterized protein from Buchnera aphidicola subsp. Acyrthosiphon pisum (strain APS) (Acyrthosiphon pisum symbiotic bacterium).